Reading from the N-terminus, the 296-residue chain is MNRTATRVLSSIEEVREALAGPGRVGLVPTMGYLHEGHAALIRRARAECDTVVLSVFVNPRQFGVNEDLSRYPRDLNRDLAVAEAAGADLLFHPDVATMYPAGYATTVAVGGVSEPLEGSSRPGHFDGVATVVLKLLNIVQPERAYFGEKDWQQLAVVRRMVRDLNVPVQIVGVPTVREPSGLALSSRNSYLTPEQQARAAILSRALQAVQAAAAAGERDTARLRQAGLAVLAEEPEIELDYLAVVDGDMREKAHVENDPLTRVLVAARLFGVRLIDNVPLSPAERRLSERESRNT.

31–38 (MGYLHEGH) is an ATP binding site. Residue His38 is the Proton donor of the active site. Gln62 contributes to the (R)-pantoate binding site. Gln62 is a beta-alanine binding site. 148–151 (GEKD) is an ATP binding site. Residue Gln154 coordinates (R)-pantoate. Residues Val177 and 185–188 (LSSR) contribute to the ATP site.

This sequence belongs to the pantothenate synthetase family. Homodimer.

The protein localises to the cytoplasm. It carries out the reaction (R)-pantoate + beta-alanine + ATP = (R)-pantothenate + AMP + diphosphate + H(+). It functions in the pathway cofactor biosynthesis; (R)-pantothenate biosynthesis; (R)-pantothenate from (R)-pantoate and beta-alanine: step 1/1. Catalyzes the condensation of pantoate with beta-alanine in an ATP-dependent reaction via a pantoyl-adenylate intermediate. This chain is Pantothenate synthetase, found in Deinococcus geothermalis (strain DSM 11300 / CIP 105573 / AG-3a).